Here is a 274-residue protein sequence, read N- to C-terminus: Isoprenyl transferase (274 aa).

Residue Asp49 is part of the active site. Position 49 (Asp49) interacts with Mg(2+). Substrate-binding positions include 50–53 (GNRR), Phe54, Arg62, His66, and 94–96 (STD). The active-site Proton acceptor is the Asn97. Substrate is bound by residues Arg100, Arg223, and 229–231 (RLS). Glu242 serves as a coordination point for Mg(2+).

The protein belongs to the UPP synthase family. In terms of assembly, homodimer. Requires Mg(2+) as cofactor.

Its function is as follows. Catalyzes the condensation of isopentenyl diphosphate (IPP) with allylic pyrophosphates generating different type of terpenoids. The protein is Isoprenyl transferase of Deinococcus radiodurans (strain ATCC 13939 / DSM 20539 / JCM 16871 / CCUG 27074 / LMG 4051 / NBRC 15346 / NCIMB 9279 / VKM B-1422 / R1).